Consider the following 267-residue polypeptide: Energy-coupling factor transporter transmembrane protein EcfT (267 aa).

A run of 5 helical transmembrane segments spans residues 26 to 46 (IILTFIMMIFIFLINTYWGYL), 73 to 93 (ILFIVVFAGIINIFMIKGTVI), 116 to 136 (LFLLIITASLLTYTTTPIALT), 151 to 171 (VPVHEIAMMMTIALRFIPTLL), and 247 to 267 (LVTGITVVFMTWVILMEYVFF).

The protein belongs to the energy-coupling factor EcfT family. Forms a stable energy-coupling factor (ECF) transporter complex composed of 2 membrane-embedded substrate-binding proteins (S component), 2 ATP-binding proteins (A component) and 2 transmembrane proteins (T component). May be able to interact with more than 1 S component at a time.

It is found in the cell membrane. Its function is as follows. Transmembrane (T) component of an energy-coupling factor (ECF) ABC-transporter complex. Unlike classic ABC transporters this ECF transporter provides the energy necessary to transport a number of different substrates. In Ruminiclostridium cellulolyticum (strain ATCC 35319 / DSM 5812 / JCM 6584 / H10) (Clostridium cellulolyticum), this protein is Energy-coupling factor transporter transmembrane protein EcfT.